The chain runs to 630 residues: MTGLLASRLRAEGARSPTKGTDIPMRQPSAEDLDAAHQLVSSARGGRDNVMNFRSDRQEMTGKALDNTQGDGSRNMDSQLQNGHKAPVEQRAGESPPESGANPIDHPTSSKKSPKAQSKEQAFTGHSCSNCGTKRTPLWRRSPTGATICNACGLYLKARNTDRPTHRSRSLLTPYGSSSAQTLDKSRSSTSPTNDGNDPRLTDTWSNYAVKECTPSGSCPGGGSCNGTGGAEGCDGCPAYNNRVYKSAARNAMALHTPRTSPQVSTQGGPGSTEGDAGSSNPETMTLHIACQNCQTTVTPLWRRDENGHPICNACGLYHKLHGAYRPPTMKKSIIKRRKRVVPAMREQSPPSATQSSNGSVSPEASPAALAHNHDSHRQYQNVEHGNGHPPPHTRPLYSHAYHAPPPADFTGYTSNVISLPHHPPSTSQQLRPYDNNHNNGETTNTHRAPMPALHNPKKRTISESSIEDSQRPQASQILTHIPQINPPTPPSSSSASFPNNNPGRFNSISSLLNHPGEAATVTAHDRDDSRVDPALSSAVAPRTQQPQQEHQHASAGSHSPPRFSPSLSPAPPSTTAVPVGGGSGSGAAAVAGVVDHRDAKAERRARLQREAQDMREALKAKERELALLE.

Disordered stretches follow at residues M1 to W139 and D162 to D203. 3 stretches are compositionally biased toward polar residues: residues D66–N82, K115–T133, and Y175–G196. Residues C128–C152 form a GATA-type 1 zinc finger. Positions C219 to C237 are cystein-rich region (CRR). Positions H256–E283 are disordered. Polar residues predominate over residues P258–Q267. A GATA-type 2 zinc finger spans residues C291–C315. Residues K339–Q609 are disordered. The segment covering S349–P363 has biased composition (polar residues). Low complexity-rich tracts occupy residues N436–H447 and S492–P503. A compositionally biased stretch (polar residues) spans G504–L513. Over residues S558–L568 the composition is skewed to low complexity. Over residues V595–Q609 the composition is skewed to basic and acidic residues. The stretch at V595 to E630 forms a coiled coil.

It is found in the nucleus. GATA-type transcription repressor that regulates iron- acquisition genes through specific binding the GATA sequence element 5'-(G/A)ATC(T/A)GATAA-3' of target promoters in an iron- and zinc-dependent manner. Regulation occurs via direct binding of iron ions. Iron acquisition regulation is critical for survival under both iron-limiting conditions (to acquire essential iron) and iron-replete conditions (to limit iron toxicity). SRE1 targets include genes encoding a number of key iron-regulated factors such as those involved in siderophore biosynthesis, presumed ferric reductase activity, iron-responsive transcriptional regulation, oxidative stress response, as well as genes encoding a number of putative oxidoreductases, metabolic and mitochondrial enzymes, superoxide dismutase, and genes previously identified as induced during nitrosative stress. The polypeptide is GATA-type transcription factor SRE1 (Ajellomyces capsulatus (Darling's disease fungus)).